The primary structure comprises 129 residues: Virion-associated protein (129 aa).

Coiled coils occupy residues 1–31 (MANL…ILEM) and 38–59 (IKES…LIND). A capsid binding region spans residues 122–129 (PAGWPNQF).

It belongs to the caulimovirus ORF III family. Homotetramer, through coiled-coil domain. Homotrimer when interacts with icosehadral capsid. Interacts with capsid protein, and with Movement protein.

The protein resides in the virion. Its subcellular location is the host cell junction. It is found in the host plasmodesma. In terms of biological role, plays a role in virus cell-to-cell and plant-to-plant transmission. Interacts with virion icosahedral capsid and movement protein, thereby facilitating virion cell-to-cell transmission through plasmodesmata opened by viral movement protein. Also interacts with aphid transmission factor, attaching the virion to aphid stylet when the animal feeds on an virus infected plant. Aphid saliva may later detach the virion, inducing release of infectious particles when the animal feeds on a new plant. This Arabidopsis thaliana (Mouse-ear cress) protein is Virion-associated protein.